The sequence spans 244 residues: Ribonuclease PH (244 aa).

Phosphate contacts are provided by residues arginine 90 and glycine 128–arginine 130.

The protein belongs to the RNase PH family. Homohexameric ring arranged as a trimer of dimers.

The enzyme catalyses tRNA(n+1) + phosphate = tRNA(n) + a ribonucleoside 5'-diphosphate. In terms of biological role, phosphorolytic 3'-5' exoribonuclease that plays an important role in tRNA 3'-end maturation. Removes nucleotide residues following the 3'-CCA terminus of tRNAs; can also add nucleotides to the ends of RNA molecules by using nucleoside diphosphates as substrates, but this may not be physiologically important. Probably plays a role in initiation of 16S rRNA degradation (leading to ribosome degradation) during starvation. In Prochlorococcus marinus (strain MIT 9313), this protein is Ribonuclease PH.